Consider the following 78-residue polypeptide: Translational regulator CsrA (78 aa).

Belongs to the CsrA/RsmA family. Homodimer; the beta-strands of each monomer intercalate to form a hydrophobic core, while the alpha-helices form wings that extend away from the core.

The protein resides in the cytoplasm. A translational regulator that binds mRNA to regulate translation initiation and/or mRNA stability. Usually binds in the 5'-UTR at or near the Shine-Dalgarno sequence preventing ribosome-binding, thus repressing translation. Its main target seems to be the major flagellin gene, while its function is anatagonized by FliW. The chain is Translational regulator CsrA from Desulfovibrio desulfuricans (strain ATCC 27774 / DSM 6949 / MB).